We begin with the raw amino-acid sequence, 158 residues long: Protein E6 (158 aa).

Zinc fingers lie at residues 32–68 (CVYC…CQSC) and 105–141 (CMCC…CRHC). The PDZ-binding domain motif lies at 156 to 158 (TQV).

It belongs to the papillomaviridae E6 protein family. In terms of assembly, forms homodimers. Interacts with ubiquitin-protein ligase UBE3A/E6-AP; this interaction stimulates UBE3A ubiquitin activity. Interacts with host BAK1.

The protein resides in the host cytoplasm. Its subcellular location is the host nucleus. Functionally, plays a major role in the induction and maintenance of cellular transformation. E6 associates with host UBE3A/E6-AP ubiquitin-protein ligase and modulates its activity. Protects host keratinocytes from apoptosis by mediating the degradation of host BAK1. May also inhibit host immune response. This is Protein E6 from Homo sapiens (Human).